Here is a 521-residue protein sequence, read N- to C-terminus: Biotinidase (521 aa).

The N-terminal stretch at 1 to 25 is a signal peptide; sequence MSGARTAHALVFLLGCSALALGVCS. Residues 50 to 329 form the CN hydrolase domain; that stretch reads NPLELSSRQQ…QGLVGTENTT (280 aa). Glu-90 functions as the Proton acceptor in the catalytic mechanism. N-linked (GlcNAc...) asparagine glycosylation is found at Asn-128 and Asn-181. Catalysis depends on Lys-190, which acts as the Proton donor. Catalysis depends on Cys-223, which acts as the Nucleophile. A glycan (N-linked (GlcNAc...) asparagine) is linked at Asn-380.

This sequence belongs to the carbon-nitrogen hydrolase superfamily. BTD/VNN family.

Its subcellular location is the secreted. It is found in the extracellular space. It carries out the reaction biocytin + H2O = biotin + L-lysine. The catalysed reaction is biotin amide + H2O = biotin + NH4(+). Functionally, catalytic release of biotin from biocytin, the product of biotin-dependent carboxylases degradation. In Rattus norvegicus (Rat), this protein is Biotinidase.